A 432-amino-acid chain; its full sequence is Neuropeptide FF receptor 1 (432 aa).

Residues 1-43 (MEAEPSQPPNGSWPLGQNGSDVETSMATSLTFSSYYQHSSPVA) are Extracellular-facing. 2 N-linked (GlcNAc...) asparagine glycosylation sites follow: N10 and N18. The helical transmembrane segment at 44–64 (AMFIAAYVLIFLLCMVGNTLV) threads the bilayer. Residues 65–80 (CFIVLKNRHMRTVTNM) lie on the Cytoplasmic side of the membrane. Residues 81–101 (FILNLAVSDLLVGIFCMPTTL) form a helical membrane-spanning segment. Residues 102 to 117 (VDNLITGWPFDNATCK) lie on the Extracellular side of the membrane. The N-linked (GlcNAc...) asparagine glycan is linked to N113. Residues C116 and C203 are joined by a disulfide bond. The helical transmembrane segment at 118–138 (MSGLVQGMSVSASVFTLVAIA) threads the bilayer. Residues 139 to 158 (VERFRCIVHPFREKLTLRKA) lie on the Cytoplasmic side of the membrane. The helical transmembrane segment at 159–179 (LFTIAVIWALALLIMCPSAVT) threads the bilayer. At 180 to 214 (LTVTREEHHFMLDARNRSYPLYSCWEAWPEKGMRK) the chain is on the extracellular side. N-linked (GlcNAc...) asparagine glycosylation is present at N195. The helical transmembrane segment at 215 to 235 (VYTAVLFAHIYLVPLALIVVM) threads the bilayer. Over 236-273 (YVRIARKLCQAPGPARDTEEAVAEGGRTSRRRARVVHM) the chain is Cytoplasmic. Residues 274-294 (LVMVALFFTLSWLPLWVLLLL) form a helical membrane-spanning segment. The Extracellular portion of the chain corresponds to 295-309 (IDYGELSELQLHLLS). A helical membrane pass occupies residues 310–330 (VYAFPLAHWLAFFHSSANPII). At 331 to 432 (YGYFNENFRR…MPLTIPAWNI (102 aa)) the chain is on the cytoplasmic side. Residues 380 to 406 (PSDSGLPSESGPSSGVPGPGRLPLRNG) show a composition bias toward low complexity. Residues 380–422 (PSDSGLPSESGPSSGVPGPGRLPLRNGRVAHQDGPGEGPGCNH) are disordered.

Belongs to the G-protein coupled receptor 1 family. Expressed at high levels in the hypothalamus. Moderate levels found in the midbrain, thalamus, medulla oblongata, testis, eye, whole brain, cerebral cortex, striatum, hippocampus, cerebellum, optic nerve, placenta, spinal cord, pituitary gland and ovary.

Its subcellular location is the cell membrane. Receptor for NPAF (A-18-F-amide) and NPFF (F-8-F-amide) neuropeptides, also known as morphine-modulating peptides. Can also be activated by a variety of naturally occurring or synthetic FMRF-amide like ligands. This receptor mediates its action by association with G proteins that activate a phosphatidylinositol-calcium second messenger system. This Rattus norvegicus (Rat) protein is Neuropeptide FF receptor 1 (Npffr1).